The following is a 38-amino-acid chain: Large ribosomal subunit protein bL36 (38 aa).

This sequence belongs to the bacterial ribosomal protein bL36 family.

In Myxococcus xanthus (strain DK1622), this protein is Large ribosomal subunit protein bL36.